A 912-amino-acid chain; its full sequence is Protein translocase subunit SecA (912 aa).

Residues Q86, G104–T108, and D494 each bind ATP. The disordered stretch occupies residues E860 to R912.

Belongs to the SecA family. Monomer and homodimer. Part of the essential Sec protein translocation apparatus which comprises SecA, SecYEG and auxiliary proteins SecDF. Other proteins may also be involved.

The protein localises to the cell membrane. It localises to the cytoplasm. The catalysed reaction is ATP + H2O + cellular proteinSide 1 = ADP + phosphate + cellular proteinSide 2.. In terms of biological role, part of the Sec protein translocase complex. Interacts with the SecYEG preprotein conducting channel. Has a central role in coupling the hydrolysis of ATP to the transfer of proteins into and across the cell membrane, serving as an ATP-driven molecular motor driving the stepwise translocation of polypeptide chains across the membrane. The protein is Protein translocase subunit SecA of Arthrobacter sp. (strain FB24).